The sequence spans 105 residues: Pyrimidine/purine nucleoside phosphorylase (105 aa).

Belongs to the nucleoside phosphorylase PpnP family.

It catalyses the reaction a purine D-ribonucleoside + phosphate = a purine nucleobase + alpha-D-ribose 1-phosphate. The catalysed reaction is adenosine + phosphate = alpha-D-ribose 1-phosphate + adenine. The enzyme catalyses cytidine + phosphate = cytosine + alpha-D-ribose 1-phosphate. It carries out the reaction guanosine + phosphate = alpha-D-ribose 1-phosphate + guanine. It catalyses the reaction inosine + phosphate = alpha-D-ribose 1-phosphate + hypoxanthine. The catalysed reaction is thymidine + phosphate = 2-deoxy-alpha-D-ribose 1-phosphate + thymine. The enzyme catalyses uridine + phosphate = alpha-D-ribose 1-phosphate + uracil. It carries out the reaction xanthosine + phosphate = alpha-D-ribose 1-phosphate + xanthine. Catalyzes the phosphorolysis of diverse nucleosides, yielding D-ribose 1-phosphate and the respective free bases. Can use uridine, adenosine, guanosine, cytidine, thymidine, inosine and xanthosine as substrates. Also catalyzes the reverse reactions. The polypeptide is Pyrimidine/purine nucleoside phosphorylase (Ralstonia pickettii (strain 12J)).